The sequence spans 324 residues: Acetyl-coenzyme A carboxylase carboxyl transferase subunit alpha (324 aa).

The 255-residue stretch at 44 to 298 (RFQNQLVKLQ…KKELTEQLDS (255 aa)) folds into the CoA carboxyltransferase C-terminal domain.

This sequence belongs to the AccA family. Acetyl-CoA carboxylase is a heterohexamer composed of biotin carboxyl carrier protein (accB), biotin carboxylase (accC) and two subunits each of ACCase subunit alpha (accA) and ACCase subunit beta (accD).

It localises to the plastid. Its subcellular location is the chloroplast. It carries out the reaction N(6)-carboxybiotinyl-L-lysyl-[protein] + acetyl-CoA = N(6)-biotinyl-L-lysyl-[protein] + malonyl-CoA. The protein operates within lipid metabolism; malonyl-CoA biosynthesis; malonyl-CoA from acetyl-CoA: step 1/1. Its function is as follows. Component of the acetyl coenzyme A carboxylase (ACC) complex. First, biotin carboxylase catalyzes the carboxylation of biotin on its carrier protein (BCCP) and then the CO(2) group is transferred by the carboxyltransferase to acetyl-CoA to form malonyl-CoA. This Pyropia yezoensis (Susabi-nori) protein is Acetyl-coenzyme A carboxylase carboxyl transferase subunit alpha.